The chain runs to 84 residues: MTFYERTVDLGLKAYKTTLSPFIGRQCRYLPTCSEYAAQALKDHGPLKGSWLAVGRICRCNPLGGSGYDPPPPPKTPRKWKCEE.

The segment at leucine 63–glutamate 84 is disordered.

The protein belongs to the UPF0161 family.

It is found in the cell inner membrane. Its function is as follows. Could be involved in insertion of integral membrane proteins into the membrane. The protein is Putative membrane protein insertion efficiency factor of Caulobacter sp. (strain K31).